Here is a 306-residue protein sequence, read N- to C-terminus: Type 3 secretion system translocon protein SctB (306 aa).

A helical transmembrane segment spans residues 128 to 152; the sequence is LMIAMAVVSGIMAATSTVASAFSIA.

It belongs to the SctB/YopD family. As to quaternary structure, the core secretion machinery of the T3SS is composed of approximately 20 different proteins, including cytoplasmic components, a base, an export apparatus and a needle. This subunit is involved in the formation of a pore, called the translocon, in host membrane. Interacts with YopB/SctE and YopE. Together with YopB/SctE, forms a multimeric integral membrane complex with a mass of between 500 and 700 kDa. Interacts with its cognate chaperone SycD.

Its subcellular location is the secreted. It is found in the host membrane. Its function is as follows. Component of the type III secretion system (T3SS), also called injectisome, which is used to inject bacterial effector proteins into eukaryotic host cells. YopB/SctE and YopD/SctB are inserted into the host membrane where they form a pore and allow the translocation of effector proteins into the cytosol of target cells. Involved in pathogenesis. Essential for the establishment of Yersinia infections in a mouse model system, but not for the targeting of effector Yops. May modulate the host's immune response at a distance from the site of infection. In Yersinia enterocolitica, this protein is Type 3 secretion system translocon protein SctB.